A 320-amino-acid polypeptide reads, in one-letter code: Zinc finger protein 330 (320 aa).

Positions 1 to 23 (MPKKKTGARKKAENRREREKQLR) are disordered. A Nuclear localization signal motif is present at residues 3 to 11 (KKKTGARKK). Basic and acidic residues predominate over residues 10–22 (KKAENRREREKQL). 4 C4-type zinc fingers span residues 42-58 (CDKC…CYFC), 67-104 (CAQC…CDFC), 129-149 (CVEC…CSFC), and 175-189 (CVSC…CLRC). 2 disordered regions span residues 206-250 (EKGK…ASGY) and 264-303 (GASY…TNLN). Residues 216 to 225 (CGHETQETKD) are compositionally biased toward basic and acidic residues. Acidic residues predominate over residues 269 to 287 (DEEEDEYEAEDDEEEEDEG). Position 291 is a phosphoserine (S291).

It belongs to the NOA36 family.

The protein localises to the nucleus. It localises to the nucleolus. It is found in the chromosome. Its subcellular location is the centromere. The protein is Zinc finger protein 330 (ZNF330) of Bos taurus (Bovine).